Reading from the N-terminus, the 1108-residue chain is MSAWLLPAGGLPGAGFCVPARQSPSSFSRVLRWPRPGLPGLLLLLLLPSPSALSAVFKVGVLGPWACDPIFARARPDLAARLAANRLNRDFALDGGPRFEVALLPEPCLTPGSLGAVSSALSRVSGLVGPVNPAACRPAELLAQEAGVALVPWGCPGTRAAGTTAPAVTPAADALYVLLRAFRWARVALITAPQDLWVEAGRALSTALRARGLPVALVTSMETSDRSGAREALGRIRDGPRVRVVIMVMHSVLLGGEEQRYLLEAAEELALTDGSLVFLPFDTLHYALSPGPEALAAFVNSSQLRRAHDAVLTLTRRCPPGGSVQDSLRRAQEHQELPLDLNLKQVSPLFGTIYDAVFLLAGGVKRARTAVGGGWVSGASVARQVREAQVSGFCGVLGRTEEPSFVLLDTDASGEQLFATHLLDPVLGSLRSAGTPMHFPRGGPAPGPDPSCWFDPDVICNGGVEPGLVFVGFLLVIGMGLTGAFLAHYLRHRLLHMQMASGPNKIILTLEDVTFLHPPGGSSRKVVQGSRSSLATRSASDIRSVPSQPQESTNVGLYEGDWVWLKKFPGEHHMAIRPATKTAFSKLRELRHENVALYLGLFLAGTADSPATPGEGILAVVSEHCARGSLHDLLAQREIKLDWMFKSSLLLDLIKGMRYLHHRGVAHGRLKSRNCVVDGRFVLKVTDHGHGRLLEAQRVLPEPPSAEDQLWTAPELLRDPSLERRGTLAGDVFSLAIIMQEVVCRSTPYAMLELTPEEVIQRVRSPPPLCRPLVSMDQAPMECIQLMTQCWAEHPELRPSMDLTFDLFKSINKGRKTNIIDSMLRMLEQYSSNLEDLIRERTEELEQEKQKTDRLLTQMLPPSVAEALKMGTSVEPEYFEEVTLYFSDIVGFTTISAMSEPIEVVDLLNDLYTLFDAIIGAHDVYKVETIGDAYMVASGLPQRNGQRHAAEIANMSLDILSAVGSFRMRHMPEVPVRIRIGLHSGPCVAGVVGLTMPRYCLFGDTVNTASRMESTGLPYRIHVNMSTVRILRALDQGFQMECRGRTELKGKGIEDTYWLVGRLGFNKPIPKPPDLQPGASNHGISLQEIPPERRKKLEKARPGQFTGK.

A signal peptide spans 1–54 (MSAWLLPAGGLPGAGFCVPARQSPSSFSRVLRWPRPGLPGLLLLLLLPSPSALS). At 55-465 (AVFKVGVLGP…PDVICNGGVE (411 aa)) the chain is on the extracellular side. A disulfide bridge links Cys-108 with Cys-136. Asn-300 carries an N-linked (GlcNAc...) asparagine glycan. A helical transmembrane segment spans residues 466 to 490 (PGLVFVGFLLVIGMGLTGAFLAHYL). The Protein kinase domain occupies 491–811 (RHRLLHMQMA…DLTFDLFKSI (321 aa)). Over 491–1108 (RHRLLHMQMA…KARPGQFTGK (618 aa)) the chain is Cytoplasmic. Residues 883–1013 (TLYFSDIVGF…DTVNTASRME (131 aa)) enclose the Guanylate cyclase domain. Positions 1069–1108 (IPKPPDLQPGASNHGISLQEIPPERRKKLEKARPGQFTGK) are disordered.

Belongs to the adenylyl cyclase class-4/guanylyl cyclase family. Homodimer; requires homodimerization for guanylyl cyclase activity. Interacts (via C-terminus) with RD3 (via C-terminus); promotes the exit of GUCY2E from the endoplasmic reticulum and its trafficking to the photoreceptor outer segments. Interaction with RD3 negatively regulates GUCY2E guanylate cyclase activity. In terms of processing, there are 9 conserved cysteine residues in sensory guanylate cyclases, 6 in the extracellular domain, which may be involved in intra- or interchain disulfide bonds.

It is found in the photoreceptor outer segment membrane. The protein localises to the endoplasmic reticulum membrane. The catalysed reaction is GTP = 3',5'-cyclic GMP + diphosphate. Activated by GUCA1A when free calcium ions concentration is low, and inhibited by GUCA1A when free calcium ions concentration is high. Negatively regulated by RD3; RD3 inhibits the basal and GUCA1A-stimulated guanylate cyclase activity. Functionally, catalyzes the synthesis of cyclic GMP (cGMP) in rods and cones of photoreceptors. Plays an essential role in phototransduction, by mediating cGMP replenishment. May also participate in the trafficking of membrane-asociated proteins to the photoreceptor outer segment membrane. The polypeptide is Retinal guanylyl cyclase 1 (Gucy2e) (Mus musculus (Mouse)).